A 202-amino-acid polypeptide reads, in one-letter code: Matrix protein (202 aa).

The short motif at 35-38 is the PPXY motif element; sequence PPEY. An essential for glycoprotein binding region spans residues 115–151; sequence KLRRTLIFQWADSRGPLEGEELEYSQEITWDDNTEFV.

It belongs to the lyssavirus matrix protein family. As to quaternary structure, homomultimer. Interacts with nucleoprotein and with the cytoplasmic domain of glycoprotein. Interacts with host ATP6V1A; this interaction plays an important role in virion uncoating after viral entry.

Its subcellular location is the virion membrane. It is found in the host endomembrane system. The protein localises to the host cytoplasm. In terms of biological role, plays a major role in assembly, budding and uncoating of virion after membrane fusion. Completely covers the ribonucleoprotein coil and keep it in condensed bullet-shaped form. Inhibits viral transcription and stimulates replication. Plays a major role in early induction of TRAIL-mediated apoptosis in infected neurons. Inhibits the integrated stress response (ISR) in the infected cell by blocking the formation of stress granules. The protein is Matrix protein (M) of Homo sapiens (Human).